The sequence spans 46 residues: Large ribosomal subunit protein bL36 (46 aa).

Belongs to the bacterial ribosomal protein bL36 family.

The polypeptide is Large ribosomal subunit protein bL36 (Escherichia coli O7:K1 (strain IAI39 / ExPEC)).